A 510-amino-acid chain; its full sequence is Global transcription regulator sge1 (510 aa).

Disordered stretches follow at residues 94 to 152, 393 to 438, and 469 to 510; these read PPGE…ASRN, HPFM…QQHS, and LGGT…MGRL. A compositionally biased stretch (low complexity) spans 123–143; sequence NTGMNGTATGANAANLSSAGS. Polar residues-rich tracts occupy residues 471–480 and 501–510; these read GTNTDQSQPF and PGSNNSMGRL.

It belongs to the MIT1/WOR1 family.

The protein resides in the nucleus. In terms of biological role, global transcriptional regulator of pathogenicity. Differentially regulates expression of effector genes. Also required for radial growth and production of asexual conidiospores, and plays a role in mycelium pigmentation. Not required for induction of Ave1, the effector that activates resistance mediated by the Ve1 immune receptor in tomato. The protein is Global transcription regulator sge1 of Verticillium dahliae (strain VdLs.17 / ATCC MYA-4575 / FGSC 10137) (Verticillium wilt).